A 333-amino-acid polypeptide reads, in one-letter code: Bifunctional phosphoglucose/phosphomannose isomerase (333 aa).

The SIS domain maps to leucine 22–alanine 160. The D-fructose 6-phosphate site is built by glycine 39, serine 40, serine 84, serine 86, threonine 89, and arginine 136. The Proton acceptor role is filled by glutamate 211. The D-fructose 6-phosphate site is built by histidine 227 and lysine 322. The active-site Proton donor is the histidine 227. Residue lysine 322 is the Proton acceptor of the active site.

It belongs to the PGI/PMI family. As to quaternary structure, homodimer.

It carries out the reaction alpha-D-glucose 6-phosphate = beta-D-fructose 6-phosphate. The catalysed reaction is D-mannose 6-phosphate = D-fructose 6-phosphate. Inhibited by low concentrations of erythrose 4-phosphate and 6-phosphogluconate. Dual specificity isomerase that catalyzes the isomerization of both glucose-6-phosphate and mannose-6-phosphate to fructose-6-phosphate with similar catalytic efficiency. The sequence is that of Bifunctional phosphoglucose/phosphomannose isomerase from Aeropyrum pernix (strain ATCC 700893 / DSM 11879 / JCM 9820 / NBRC 100138 / K1).